We begin with the raw amino-acid sequence, 353 residues long: Putative ABC transporter ATP-binding protein MG303 homolog (353 aa).

In terms of domain architecture, ABC transporter spans 72–312 (LYFYNLSVFV…MQLLQRYEIT (241 aa)). An ATP-binding site is contributed by 107–114 (GPSGSGKT).

It belongs to the ABC transporter superfamily.

The sequence is that of Putative ABC transporter ATP-binding protein MG303 homolog from Mycoplasma pneumoniae (strain ATCC 29342 / M129 / Subtype 1) (Mycoplasmoides pneumoniae).